The primary structure comprises 248 residues: Probable succinyl-CoA:3-ketoacid coenzyme A transferase subunit A (248 aa).

Position 24-30 (24-30 (GGFGLCG)) interacts with CoA.

The protein belongs to the 3-oxoacid CoA-transferase subunit A family. As to quaternary structure, heterodimer of a subunit A and a subunit B.

The catalysed reaction is a 3-oxo acid + succinyl-CoA = a 3-oxoacyl-CoA + succinate. The polypeptide is Probable succinyl-CoA:3-ketoacid coenzyme A transferase subunit A (scoA) (Mycobacterium bovis (strain ATCC BAA-935 / AF2122/97)).